Consider the following 223-residue polypeptide: Charged multivesicular body protein 3 (223 aa).

The N-myristoyl glycine moiety is linked to residue Gly2. Residues 2-113 (GLFGKTQEKP…LQKSTEVMKA (112 aa)) are intramolecular interaction with C-terminus. Residues 22-54 (KIRKEMRVVDRQIRDIQREEEKVKRSVKDAAKK) adopt a coiled-coil conformation. Important for autoinhibitory function regions lie at residues 59–64 (VCVVLA) and 168–169 (IL). A coiled-coil region spans residues 149 to 223 (ESMDDQEEME…MQSRLATLRS (75 aa)). Residues 151-221 (MDDQEEMEEA…EAMQSRLATL (71 aa)) form an intramolecular interaction with N-terminus region. Positions 151–223 (MDDQEEMEEA…MQSRLATLRS (73 aa)) are interaction with VPS4A. A Glycyl lysine isopeptide (Lys-Gly) (interchain with G-Cter in ubiquitin) cross-link involves residue Lys179. Residues 180 to 223 (APSKVTDALPEPEPAGAMAASEGDEEDDEEDLEAMQSRLATLRS) are disordered. Interaction with STAMBP stretches follow at residues 196–223 (AMAA…TLRS), 204–208 (EEDDE), and 222–223 (RS). Ser200 is modified (phosphoserine). An MIT-interacting motif motif is present at residues 201-212 (EGDEEDDEEDLE). The segment covering 201–212 (EGDEEDDEEDLE) has biased composition (acidic residues).

It belongs to the SNF7 family. In terms of assembly, probable core component of the endosomal sorting required for transport complex III (ESCRT-III). ESCRT-III components are thought to multimerize to form a flat lattice on the perimeter membrane of the endosome. Several assembly forms of ESCRT-III may exist that interact and act sequentially. Forms a metastable monomer in solution; its core structure (without part of the putative autoinhibitory C-terminal acidic region) oligomerizes into a flat lattice via two different dimerization interfaces. In vitro, heteromerizes with CHMP2A (but not CHMP4) to form helical tubular structures that expose membrane-interacting sites on the outside whereas VPS4B can associate on the inside of the tubule. May interact with IGFBP7; the relevance of such interaction however remains unclear. Interacts with CHMP2A. Interacts with CHMP4A; the interaction requires the release of CHMP4A autoinhibition. Interacts with VPS4A. Interacts with STAMBP; the interaction appears to relieve the autoinhibition of CHMP3. Interacts with VTA1.

The protein resides in the cytoplasm. It is found in the cytosol. Its subcellular location is the membrane. It localises to the endosome. The protein localises to the late endosome membrane. Probable core component of the endosomal sorting required for transport complex III (ESCRT-III) which is involved in multivesicular bodies (MVBs) formation and sorting of endosomal cargo proteins into MVBs. MVBs contain intraluminal vesicles (ILVs) that are generated by invagination and scission from the limiting membrane of the endosome and mostly are delivered to lysosomes enabling degradation of membrane proteins, such as stimulated growth factor receptors, lysosomal enzymes and lipids. The MVB pathway appears to require the sequential function of ESCRT-O, -I,-II and -III complexes. ESCRT-III proteins mostly dissociate from the invaginating membrane before the ILV is released. The ESCRT machinery also functions in topologically equivalent membrane fission events, such as the terminal stages of cytokinesis. ESCRT-III proteins are believed to mediate the necessary vesicle extrusion and/or membrane fission activities, possibly in conjunction with the AAA ATPase VPS4. Selectively binds to phosphatidylinositol 3,5-bisphosphate PtdIns(3,5)P2 and PtdIns(3,4)P2 in preference to other phosphoinositides tested. Involved in late stages of cytokinesis. Plays a role in endosomal sorting/trafficking of EGF receptor. The polypeptide is Charged multivesicular body protein 3 (Chmp3) (Rattus norvegicus (Rat)).